Reading from the N-terminus, the 185-residue chain is Ribosome-recycling factor (185 aa).

The protein belongs to the RRF family.

Its subcellular location is the cytoplasm. Functionally, responsible for the release of ribosomes from messenger RNA at the termination of protein biosynthesis. May increase the efficiency of translation by recycling ribosomes from one round of translation to another. The protein is Ribosome-recycling factor of Streptococcus pyogenes serotype M28 (strain MGAS6180).